The chain runs to 860 residues: Serine/threonine-protein kinase greatwall (860 aa).

Residues 23–816 (FVLVKPISRG…LKELKDHPFF (794 aa)) form the Protein kinase domain. ATP is bound by residues 29 to 37 (ISRGAFGKV) and lysine 52. Aspartate 146 (proton acceptor) is an active-site residue. Residues 514 to 537 (QGEEGGKAEPNSSSSTSPGDERNI) are disordered. A Phosphothreonine; by CDK1 modification is found at threonine 722. The AGC-kinase C-terminal domain maps to 817–860 (DGVDWENLHHQTMPFIPQPDNETDTSYFEARNTAQHLTVSGFSL).

Belongs to the protein kinase superfamily. AGC Ser/Thr protein kinase family. Post-translationally, phosphorylation at Thr-722 by CDK1 during M phase activates its kinase activity. Maximum phosphorylation occurs in prometaphase.

The protein resides in the cytoplasm. The protein localises to the cytoskeleton. It localises to the microtubule organizing center. Its subcellular location is the centrosome. It is found in the nucleus. The protein resides in the cleavage furrow. The enzyme catalyses L-seryl-[protein] + ATP = O-phospho-L-seryl-[protein] + ADP + H(+). The catalysed reaction is L-threonyl-[protein] + ATP = O-phospho-L-threonyl-[protein] + ADP + H(+). Serine/threonine kinase that plays a key role in M phase by acting as a regulator of mitosis entry and maintenance. Acts by promoting the inactivation of protein phosphatase 2A (PP2A) during M phase: does not directly inhibit PP2A but acts by mediating phosphorylation and subsequent activation of arpp19 and ensa at 'Ser-62' and 'Ser-74', respectively. ARPP19 and ENSA are phosphatase inhibitors that specifically inhibit the ppp2r2d (PR55-delta) subunit of PP2A. Inactivation of PP2A during M phase is essential to keep cyclin-B1-CDK1 activity high. Following DNA damage, it is also involved in checkpoint recovery by being inhibited. May be involved in megakaryocyte differentiation. The polypeptide is Serine/threonine-protein kinase greatwall (mastl) (Danio rerio (Zebrafish)).